The primary structure comprises 439 residues: uncharacterized protein (439 aa).

3 disordered regions span residues 1–36 (MRPG…SKQA), 126–157 (SRTG…GVPI), and 411–439 (FRSD…AVPR).

This is an uncharacterized protein from Streptomyces fradiae (Streptomyces roseoflavus).